A 162-amino-acid polypeptide reads, in one-letter code: Transcription elongation factor GreB (162 aa).

Residues 52-76 adopt a coiled-coil conformation; sequence GKRRLREIDRRIRFLSKRLEALQII.

The protein belongs to the GreA/GreB family. GreB subfamily.

Necessary for efficient RNA polymerase transcription elongation past template-encoded arresting sites. The arresting sites in DNA have the property of trapping a certain fraction of elongating RNA polymerases that pass through, resulting in locked ternary complexes. Cleavage of the nascent transcript by cleavage factors such as GreA or GreB allows the resumption of elongation from the new 3'terminus. GreB releases sequences of up to 9 nucleotides in length. The protein is Transcription elongation factor GreB of Haemophilus ducreyi (strain 35000HP / ATCC 700724).